A 432-amino-acid chain; its full sequence is Adenylosuccinate synthetase (432 aa).

GTP-binding positions include 13 to 19 (GDEGKGK) and 41 to 43 (GHT). Catalysis depends on Asp-14, which acts as the Proton acceptor. Residues Asp-14 and Gly-41 each coordinate Mg(2+). Residues 14–17 (DEGK), 39–42 (NAGH), Thr-130, Arg-144, Gln-225, Thr-240, and Arg-304 each bind IMP. His-42 (proton donor) is an active-site residue. Position 300 to 306 (300 to 306 (AVTGRPR)) interacts with substrate. GTP contacts are provided by residues Arg-306, 332–334 (KLD), and 415–417 (STG).

This sequence belongs to the adenylosuccinate synthetase family. Homodimer. The cofactor is Mg(2+).

The protein resides in the cytoplasm. It carries out the reaction IMP + L-aspartate + GTP = N(6)-(1,2-dicarboxyethyl)-AMP + GDP + phosphate + 2 H(+). It functions in the pathway purine metabolism; AMP biosynthesis via de novo pathway; AMP from IMP: step 1/2. In terms of biological role, plays an important role in the de novo pathway of purine nucleotide biosynthesis. Catalyzes the first committed step in the biosynthesis of AMP from IMP. This is Adenylosuccinate synthetase from Pasteurella multocida (strain Pm70).